Consider the following 686-residue polypeptide: Probable metal-nicotianamine transporter YSL10 (686 aa).

A run of 14 helical transmembrane segments spans residues 36–56, 60–80, 109–129, 151–171, 212–232, 271–291, 316–336, 383–403, 415–435, 461–481, 501–521, 556–576, 597–617, and 639–659; these read VTLR…VIVM, LTTG…FFLL, CVVA…IFAM, LGWM…SVVP, MLGK…FYTG, LVNI…WPLI, VFIS…KVMT, IPNW…IATV, VAVS…GCGL, GGII…STAS, FVSQ…VFWL, GSLP…AIAV, MAIP…GSLI, and GLIC…LAGV.

It belongs to the YSL (TC 2.A.67.2) family.

Its subcellular location is the membrane. In terms of biological role, may be involved in the transport of nicotianamine-chelated metals. This chain is Probable metal-nicotianamine transporter YSL10 (YSL10), found in Oryza sativa subsp. japonica (Rice).